The chain runs to 844 residues: RING finger containing E3 ubiquitin-protein ligase WSV222 (844 aa).

229 to 236 is an ATP binding site; it reads AEDDKGKT. The segment at 308-359 adopts an RING-type; atypical zinc-finger fold; that stretch reads CGVCATSVEEDENEGKTTSLSWYQMNCKHYIHCECLMGMCAAAGNVQCPMCR.

As to quaternary structure, interacts with host UBE2E1/UBCH6; this interaction results in WSV222 auto-ubiquitination. Interacts with host tumor suppressor-like protein.

It carries out the reaction S-ubiquitinyl-[E2 ubiquitin-conjugating enzyme]-L-cysteine + [acceptor protein]-L-lysine = [E2 ubiquitin-conjugating enzyme]-L-cysteine + N(6)-ubiquitinyl-[acceptor protein]-L-lysine.. Its pathway is protein modification; protein ubiquitination. In terms of biological role, probable E3 ubiquitin-protein ligase which accepts ubiquitin from the E2 ubiquitin-conjugating enzyme UBE2E1/UBCH6 in the form of a thioester and then directly transfers the ubiquitin to targeted substrates. Mediates ubiquitination of host tumor-suppressor-like protein (TSL) targeting it for degradation. Might function as an anti-apoptosis protein by counteracting TSL-induced apoptosis. The protein is RING finger containing E3 ubiquitin-protein ligase WSV222 of White spot syndrome virus (isolate Shrimp/China/Tongan/1996) (WSSV).